The sequence spans 371 residues: Solute carrier family 35 member F6 (371 aa).

An N-terminal signal peptide occupies residues 1 to 18; the sequence is MAWTKYQLFLAGLMLVTG. 2 helical membrane-spanning segments follow: residues 48-68 and 89-109; these read FLQAVGMFLGEFSCLAAFYLL and LLFLPPALCDMTGTSLMYVAL. The EamA domain occupies 104–160; the sequence is LMYVALNMTSASSFQMLRGAVIIFTGLFSVAFLGRRLVLSQWLGILATIAGLVVVGL. N-linked (GlcNAc...) asparagine glycosylation is present at asparagine 110. 7 consecutive transmembrane segments (helical) span residues 117 to 137, 140 to 160, 176 to 196, 216 to 236, 261 to 281, 295 to 312, and 317 to 336; these read FQMLRGAVIIFTGLFSVAFLG, LVLSQWLGILATIAGLVVVGL, VITGDLLIIMAQIIVAIQMVL, GLFGFVILSLLLVPMYYIPAG, LIAVALLGNISSIAFFNFAGI, LDSLRTVVIWALSLALGW, and ALQILGFLILLIGTALYNGL. A disordered region spans residues 352–371; it reads EESEQERLLGGTRTPINDAS. At threonine 365 the chain carries Phosphothreonine.

It belongs to the SLC35F solute transporter family. As to quaternary structure, interacts with SLC25A5. As to expression, expressed in pancreatic ductal adenocarcinoma (PDAC) (at protein level). Strongly expressed in prostate and thyroid. Weakly expressed in lung, heart, liver and kidney.

The protein localises to the mitochondrion. It localises to the lysosome membrane. Its function is as follows. Involved in the maintenance of mitochondrial membrane potential in pancreatic ductal adenocarcinoma (PDAC) cells. Promotes pancreatic ductal adenocarcinoma (PDAC) cell growth. May play a role as a nucleotide-sugar transporter. The protein is Solute carrier family 35 member F6 (SLC35F6) of Homo sapiens (Human).